Reading from the N-terminus, the 49-residue chain is Fungus-induced-related protein 16 (49 aa).

The chain is Fungus-induced-related protein 16 (fipr-16) from Caenorhabditis elegans.